A 404-amino-acid chain; its full sequence is Flavohemoprotein (404 aa).

One can recognise a Globin domain in the interval M1–N138. Residue H85 participates in heme b binding. Residues Y95 and E137 each act as charge relay system in the active site. The segment at G149–D404 is reductase. The 112-residue stretch at S152–H263 folds into the FAD-binding FR-type domain. FAD contacts are provided by residues Y190 and R206–S209. Position 276 to 281 (G276 to P281) interacts with NADP(+). Position 396–399 (V396–S399) interacts with FAD.

This sequence belongs to the globin family. Two-domain flavohemoproteins subfamily. The protein in the C-terminal section; belongs to the flavoprotein pyridine nucleotide cytochrome reductase family. Requires heme b as cofactor. The cofactor is FAD.

It carries out the reaction 2 nitric oxide + NADPH + 2 O2 = 2 nitrate + NADP(+) + H(+). The catalysed reaction is 2 nitric oxide + NADH + 2 O2 = 2 nitrate + NAD(+) + H(+). Is involved in NO detoxification in an aerobic process, termed nitric oxide dioxygenase (NOD) reaction that utilizes O(2) and NAD(P)H to convert NO to nitrate, which protects the bacterium from various noxious nitrogen compounds. Therefore, plays a central role in the inducible response to nitrosative stress. The sequence is that of Flavohemoprotein from Chromobacterium violaceum (strain ATCC 12472 / DSM 30191 / JCM 1249 / CCUG 213 / NBRC 12614 / NCIMB 9131 / NCTC 9757 / MK).